Here is a 361-residue protein sequence, read N- to C-terminus: Methylthioribose-1-phosphate isomerase (361 aa).

Catalysis depends on Asp245, which acts as the Proton donor.

Belongs to the eIF-2B alpha/beta/delta subunits family. MtnA subfamily.

Its subcellular location is the cytoplasm. The protein localises to the nucleus. The catalysed reaction is 5-(methylsulfanyl)-alpha-D-ribose 1-phosphate = 5-(methylsulfanyl)-D-ribulose 1-phosphate. It participates in amino-acid biosynthesis; L-methionine biosynthesis via salvage pathway; L-methionine from S-methyl-5-thio-alpha-D-ribose 1-phosphate: step 1/6. Catalyzes the interconversion of methylthioribose-1-phosphate (MTR-1-P) into methylthioribulose-1-phosphate (MTRu-1-P). In Monosiga brevicollis (Choanoflagellate), this protein is Methylthioribose-1-phosphate isomerase.